Consider the following 213-residue polypeptide: Gas vesicle protein F1 (213 aa).

Belongs to the gas vesicle GvpF/GvpL family. Binds GvpA1 in early growth stages; is the only one of GvpF1 to GvpM1 that interacts with GvpA1 in H.volcanii experiments. GvpF to GvpM interact with each other in vitro, and may form multi-subunit complex(es). Interacts with GvpC1 and GvpO1.

It is found in the gas vesicle. The protein resides in the cytoplasm. Functionally, might be involved in preventing aggregation of GvpA1. Proteins GvpF to GvpM might be involved in nucleating gas vesicle formation. A minor component of the gas vesicle, also found in soluble extracts. Gas vesicles are hollow, gas filled proteinaceous nanostructures found in several microbial planktonic microorganisms. They allow positioning of halobacteria at the optimal depth for growth in the poorly aerated, shallow brine pools of their habitat. Its function is as follows. Expression of a 9.5 kb p-vac DNA fragment containing 2 divergently transcribed regions (gvpD-gvpE-gvpF-gvpG-gvpH-gvpI-gvpJ-gvpK-gvpL-gvpM and gvpA-gvpC-gvpN-gvpO) allows H.volcanii to produce gas vesicles. A minimal gas vesicle can be made in H.volcanii by gvpA1-gvpO1 plus gvpF1-gvpG1-gvpJ1-gvpK1-gvpL1-gvpM1; lack of enough GvpJ1 prevents formation. The same region restores gas vesicle production in H.halobium without the p-vac locus. This Halobacterium salinarum (strain ATCC 700922 / JCM 11081 / NRC-1) (Halobacterium halobium) protein is Gas vesicle protein F1 (gvpF11).